Here is a 469-residue protein sequence, read N- to C-terminus: Neuraminidase (469 aa).

Topologically, residues 1-9 (MNPNQKIIT) are intravirion. The helical transmembrane segment at 10 to 30 (IGSVSLTFAAICFLMQIAILV) threads the bilayer. The involved in apical transport and lipid raft association stretch occupies residues 11–33 (GSVSLTFAAICFLMQIAILVTTV). Topologically, residues 31 to 469 (TTVTLNFKQY…DGADINLMPI (439 aa)) are virion surface. The hypervariable stalk region stretch occupies residues 36-88 (NFKQYECDPPATNQVMPCEPIIIERNITEIVYLTNTTIEREICPKLVEYRNWS). Residues Asn61, Asn70, and Asn86 are each glycosylated (N-linked (GlcNAc...) asparagine; by host). The tract at residues 91 to 469 (QCKITGFAPF…DGADINLMPI (379 aa)) is head of neuraminidase. Intrachain disulfides connect Cys92–Cys417, Cys124–Cys129, Cys183–Cys230, Cys232–Cys237, Cys278–Cys291, Cys280–Cys289, Cys318–Cys337, and Cys421–Cys447. Residue Arg118 coordinates substrate. A glycan (N-linked (GlcNAc...) asparagine; by host) is linked at Asn146. The active-site Proton donor/acceptor is the Asp151. Arg152 serves as a coordination point for substrate. 2 N-linked (GlcNAc...) asparagine; by host glycosylation sites follow: Asn200 and Asn234. 276-277 (EE) contacts substrate. Substrate is bound at residue Arg292. The Ca(2+) site is built by Asp293 and Gly297. N-linked (GlcNAc...) asparagine; by host glycosylation is present at Asn313. A Ca(2+)-binding site is contributed by Asp324. Residue Arg371 coordinates substrate. N-linked (GlcNAc...) asparagine; by host glycosylation occurs at Asn402. The Nucleophile role is filled by Tyr406.

Belongs to the glycosyl hydrolase 34 family. In terms of assembly, homotetramer. Requires Ca(2+) as cofactor. N-glycosylated.

The protein localises to the virion membrane. Its subcellular location is the host apical cell membrane. The catalysed reaction is Hydrolysis of alpha-(2-&gt;3)-, alpha-(2-&gt;6)-, alpha-(2-&gt;8)- glycosidic linkages of terminal sialic acid residues in oligosaccharides, glycoproteins, glycolipids, colominic acid and synthetic substrates.. Inhibited by the neuraminidase inhibitors zanamivir (Relenza) and oseltamivir (Tamiflu). These drugs interfere with the release of progeny virus from infected cells and are effective against all influenza strains. Resistance to neuraminidase inhibitors is quite rare. Functionally, catalyzes the removal of terminal sialic acid residues from viral and cellular glycoconjugates. Cleaves off the terminal sialic acids on the glycosylated HA during virus budding to facilitate virus release. Additionally helps virus spread through the circulation by further removing sialic acids from the cell surface. These cleavages prevent self-aggregation and ensure the efficient spread of the progeny virus from cell to cell. Otherwise, infection would be limited to one round of replication. Described as a receptor-destroying enzyme because it cleaves a terminal sialic acid from the cellular receptors. May facilitate viral invasion of the upper airways by cleaving the sialic acid moieties on the mucin of the airway epithelial cells. Likely to plays a role in the budding process through its association with lipid rafts during intracellular transport. May additionally display a raft-association independent effect on budding. Plays a role in the determination of host range restriction on replication and virulence. Sialidase activity in late endosome/lysosome traffic seems to enhance virus replication. In Influenza A virus (strain A/Swine/Kanagawa/2/1978 H1N2), this protein is Neuraminidase.